The chain runs to 688 residues: Pescadillo homolog (688 aa).

One can recognise a BRCT domain in the interval 351–470; that stretch reads EVASLFASFT…KLLRHDLYAP (120 aa). 2 disordered regions span residues 411–442 and 496–688; these read RPPL…GTRM and AEQE…TKGR. Positions 412–424 are enriched in pro residues; sequence PPLPESALPPLPQ. Residues 496–536 are a coiled coil; that stretch reads AEQESDGEAERQAEEENEEEESEVEGLSMDKEMVETENSEA. Composition is skewed to acidic residues over residues 510–519, 530–544, 554–565, and 576–589; these read EENEEEESEV, ETEN…EESV, GSDDEEEESEED, and EAAD…DDEE. The segment covering 619 to 634 has biased composition (basic residues); the sequence is KKSKKQKPLAKKHAAQ. Positions 627–686 form a coiled coil; it reads LAKKHAAQKKKEQEELERQKMMMSRKKRKLLDKMLYSNKKKDEEAEKLRRKRRKIEQGTK. Basic and acidic residues predominate over residues 635-646; it reads KKKEQEELERQK.

It belongs to the pescadillo family. As to quaternary structure, component of the NOP7 complex, composed of ERB1, NOP7 and YTM1. The complex is held together by ERB1, which interacts with NOP7 via its N-terminal domain and with YTM1 via a high-affinity interaction between the seven-bladed beta-propeller domains of the 2 proteins. The NOP7 complex associates with the 66S pre-ribosome.

The protein resides in the nucleus. The protein localises to the nucleolus. Its subcellular location is the nucleoplasm. Component of the NOP7 complex, which is required for maturation of the 25S and 5.8S ribosomal RNAs and formation of the 60S ribosome. The protein is Pescadillo homolog of Coccidioides immitis (strain RS) (Valley fever fungus).